The following is a 66-amino-acid chain: MARWNVCSYCGKPFEPGTGKMYVRNDGRVLFFCSRKCERYYFMGRNPRKLKWTKAYQEARLQRGGE.

The Zn(2+) site is built by cysteine 7, cysteine 10, cysteine 33, and cysteine 37. The segment at 7–37 (CSYCGKPFEPGTGKMYVRNDGRVLFFCSRKC) adopts a C4-type zinc-finger fold.

This sequence belongs to the eukaryotic ribosomal protein eL24 family. Part of the 50S ribosomal subunit. Forms a cluster with proteins L3 and L14. Requires Zn(2+) as cofactor.

Its function is as follows. Binds to the 23S rRNA. This chain is Large ribosomal subunit protein eL24, found in Pyrococcus furiosus (strain ATCC 43587 / DSM 3638 / JCM 8422 / Vc1).